The sequence spans 502 residues: Glutamate--tRNA ligase (502 aa).

Residues proline 9–threonine 19 carry the 'HIGH' region motif. Cysteine 106, cysteine 108, cysteine 133, and histidine 135 together coordinate Zn(2+). Positions lysine 250–arginine 254 match the 'KMSKS' region motif. Lysine 253 serves as a coordination point for ATP.

The protein belongs to the class-I aminoacyl-tRNA synthetase family. Glutamate--tRNA ligase type 1 subfamily. As to quaternary structure, monomer. It depends on Zn(2+) as a cofactor.

The protein localises to the cytoplasm. The enzyme catalyses tRNA(Glu) + L-glutamate + ATP = L-glutamyl-tRNA(Glu) + AMP + diphosphate. In terms of biological role, catalyzes the attachment of glutamate to tRNA(Glu) in a two-step reaction: glutamate is first activated by ATP to form Glu-AMP and then transferred to the acceptor end of tRNA(Glu). This is Glutamate--tRNA ligase from Protochlamydia amoebophila (strain UWE25).